The primary structure comprises 500 residues: ERAD-associated E3 ubiquitin-protein ligase HRD1 (500 aa).

Residues 1–3 are Cytoplasmic-facing; that stretch reads MIR. A helical membrane pass occupies residues 4–24; sequence LQTYAAFSLMATATAVYYAFS. At 25-40 the chain is on the lumenal side; it reads SREQFYPAMVYLSTSK. Residues 41–61 form a helical membrane-spanning segment; sequence ICFVLLLNTGLVAMCVAWQLV. The Cytoplasmic segment spans residues 62-98; it reads KRLFLGTLREAEVERLNEQAWREVVEILFAVTIFRQD. Residues 99–119 form a helical membrane-spanning segment; the sequence is FSVSFLAMVAALLLVKALHWL. Topologically, residues 120–135 are lumenal; the sequence is AQKRVEYIETTPSVPM. Residues 136 to 156 traverse the membrane as a helical segment; it reads LSHARIVSFMLFLLVVDCLFL. Residues 157–170 lie on the Cytoplasmic side of the membrane; that stretch reads SNSLRSLIHKREAS. The helical transmembrane segment at 171–191 threads the bilayer; sequence VAIFFSFEYMILATSTVSTFV. Over 192-225 the chain is Lumenal; sequence KYIFYVSDMLMEGQWEKKAVYTFYLELISDLVHL. A helical transmembrane segment spans residues 226-246; sequence SLYMLFFIAIFLNYGVPLHLI. Topologically, residues 247–500 are cytoplasmic; sequence RELYETFRNF…NENGEHTKSD (254 aa). The RING-type; atypical zinc finger occupies 292 to 330; sequence CIICREEMTTAKKLLCGHLFHVHCLRSWLERQHTCPTCR. 2 disordered regions span residues 337–375 and 398–438; these read DNGR…SRRQ and NNLN…SAPT. Residues 348–358 show a composition bias toward low complexity; it reads VHPGVQPVPGN. Residues 398–426 are compositionally biased toward polar residues; it reads NNLNRYSTPPQSTSNGPQSGEASTSNQSP.

It belongs to the HRD1 family.

Its subcellular location is the endoplasmic reticulum membrane. The catalysed reaction is S-ubiquitinyl-[E2 ubiquitin-conjugating enzyme]-L-cysteine + [acceptor protein]-L-lysine = [E2 ubiquitin-conjugating enzyme]-L-cysteine + N(6)-ubiquitinyl-[acceptor protein]-L-lysine.. The protein operates within protein modification; protein ubiquitination. Functionally, probable component of the HRD1 ubiquitin ligase complex that mediates the rapid degradation of misfolded endoplasmic reticulum (ER) proteins, a process called ER-associated degradation (ERAD). This is ERAD-associated E3 ubiquitin-protein ligase HRD1 from Oryza sativa subsp. japonica (Rice).